The chain runs to 543 residues: Zinc metalloproteinase (543 aa).

An N-terminal signal peptide occupies residues 1 to 24; it reads MHPNYYLSPLAVAIALGIASPVKA. The propeptide occupies 25-207; sequence ADPIPLQKSS…PFVQWDDVKT (183 aa). Histidine 377 is a binding site for Zn(2+). The active site involves glutamate 378. Zn(2+)-binding residues include histidine 381 and glutamate 401. The active-site Proton donor is the histidine 463.

It belongs to the peptidase M4 family. The cofactor is Zn(2+).

The protein localises to the secreted. Functionally, cleaves collagen, gelatin, casein, alpha-1-antitrypsin, and bovine insulin. May play a role in the pathogenesis of legionnaires disease. The protein is Zinc metalloproteinase of Legionella pneumophila.